The primary structure comprises 341 residues: Phosphoribosylformylglycinamidine cyclo-ligase (341 aa).

The protein belongs to the AIR synthase family.

The protein resides in the cytoplasm. The enzyme catalyses 2-formamido-N(1)-(5-O-phospho-beta-D-ribosyl)acetamidine + ATP = 5-amino-1-(5-phospho-beta-D-ribosyl)imidazole + ADP + phosphate + H(+). The protein operates within purine metabolism; IMP biosynthesis via de novo pathway; 5-amino-1-(5-phospho-D-ribosyl)imidazole from N(2)-formyl-N(1)-(5-phospho-D-ribosyl)glycinamide: step 2/2. In Agathobacter rectalis (strain ATCC 33656 / DSM 3377 / JCM 17463 / KCTC 5835 / VPI 0990) (Eubacterium rectale), this protein is Phosphoribosylformylglycinamidine cyclo-ligase.